The sequence spans 289 residues: Putative transmembrane protein ORF289 (289 aa).

Residues 1 to 152 are Extracellular-facing; the sequence is MAIAKEFLLT…QYTSVVTFRT (152 aa). The helical transmembrane segment at 153–173 threads the bilayer; sequence LVAPILYFFALFLVPAWSTVL. The Cytoplasmic segment spans residues 174-234; sequence KQNPTFPQSQ…NGEVTSTQVN (61 aa). A helical transmembrane segment spans residues 235-255; sequence APIFIGVTTPSGVLVLAYNYY. The Extracellular portion of the chain corresponds to 256–289; it reads SGTISKYVSLTVTTTYGSATVINQFETKTTGGTT.

The protein localises to the host membrane. In Acidianus sp. F28 (AFV-2), this protein is Putative transmembrane protein ORF289.